A 533-amino-acid polypeptide reads, in one-letter code: DELLA protein 2 (533 aa).

Positions 1-12 (MKREHKLEHEDM) are enriched in basic and acidic residues. Residues 1–24 (MKREHKLEHEDMSSGSGKSGVCWE) form a disordered region. The DELLA motif motif lies at 31-35 (DELLA). Residues 157-522 (VETQEKGIRL…RPLIATSAWK (366 aa)) form the GRAS domain. Residues 164–218 (IRLVHSLMACAEAVEQNNLKMAEALVKQIGYLAVSQEGAMRKVATYFAEGLARRI) are leucine repeat I (LRI). The interval 166–203 (LVHSLMACAEAVEQNNLKMAEALVKQIGYLAVSQEGAM) is required for possible homodimerization. Positions 171–175 (MACAE) match the LxCxE motif; degenerate motif. The segment at 232-297 (QIHFYETCPN…GGPPAFRLTG (66 aa)) is VHIID. The VHIID signature appears at 263–267 (VHVID). Positions 311–343 (QVGWRLAQFAQTIHVQFEYRGFVANSLADLDAS) are leucine repeat II (LRII). The segment at 355 to 443 (VAVNSVFELH…EVYLGKQICN (89 aa)) is PFYRE. Positions 363 to 367 (LHKLN) match the LXXLL motif; degenerate motif. The interval 446 to 522 (ACEGTDRVER…RPLIATSAWK (77 aa)) is SAW.

It belongs to the GRAS family. DELLA subfamily. As to quaternary structure, may be a homodimer. Post-translationally, ubiquitinated. Upon GA application it is ubiquitinated, leading to its subsequent degradation.

The protein resides in the nucleus. Functionally, probable transcriptional regulator that acts as a repressor of the gibberellin (GA) signaling pathway. Probably acts by participating in large multiprotein complexes that repress transcription of GA-inducible genes. Upon GA application, it is degraded by the proteasome, allowing the GA signaling pathway. Together with DELLA1, required to enable arbuscule development during arbuscular mycorrhizal (AM) symbiosis with AM fungi (e.g. Glomus versiforme) via the regulation of RAM1 which, in turn, regulates various AM genes (e.g. NSP1, NSP2, PT4, LEC5, RAM2, EXO70I, STR and RAD1). The protein is DELLA protein 2 of Medicago truncatula (Barrel medic).